Consider the following 313-residue polypeptide: WD repeat-containing protein 82-B (313 aa).

WD repeat units follow at residues 19–58 (ENSD…PKRT), 105–144 (GHSK…CQGL), 146–184 (HLQG…KGPF), 192–231 (DRTC…VMHT), 236–276 (NNSK…KVAV), and 280–313 (KHTG…TIDD).

This sequence belongs to the WD repeat SWD2 family. As to quaternary structure, component of the SET1/COMPASS complex. Component of the PNUTS-PP1 phosphatase complex.

It is found in the nucleus. The protein localises to the chromosome. It localises to the cytoplasm. Regulatory component of the SET1/COMPASS complex implicated in the tethering of this complex to transcriptional start sites of active genes. Facilitates histone H3 'Lys-4' methylation (H3K4me) via recruitment of the SETD1A or SETD1B to the 'Ser-5' phosphorylated C-terminal domain (CTD) of RNA polymerase II large subunit (POLR2A). Component of the PNUTS-PP1 protein phosphatase complex, a protein phosphatase 1 (PP1) complex that promotes RNA polymerase II transcription pause-release, allowing transcription elongation. This is WD repeat-containing protein 82-B (wdr82-b) from Xenopus laevis (African clawed frog).